The primary structure comprises 380 residues: MVSARALLWAICVLRVALATVYFQEEFLDGERWRNRWVQSTNDSQFGHFRVSSGKFYGHKEKDKGLQTTQNSRFYAISASFKPFSNKGKTLVIQYTVKHEQKMDCGGGYIKVFPSDLDQKKMNGKSQYYIMFGPDICGFDIKKVHVILYFKNQYHENKKPIRCKVDGFTHLYTLILRPDLSYEVKVDGQSIESGSIEYDWNLTSLRKTEKTSLDSRDWDQVEGSKVQDWEKHFLDAGASKPSDWNSELDGDWLQKPPYEDGLKAEGIDKDVWLHQKMRPAGYLTQYDLSEFENIGAIGLELWQVRSGTIFDNFLITDDEEYAEKFGKATWGETKGPEKEMDAIQAKEEVKKAREEDEEDLLMGKFHRHNHFSRFHRQGEL.

An N-terminal signal peptide occupies residues Met1 to Ala19. The interval Thr20–Glu197 is N-domain. A glycan (N-linked (GlcNAc...) asparagine) is linked at Asn42. The an alpha-D-glucoside site is built by Tyr109, Lys111, Tyr128, and Asp135. Cys137 and Cys163 form a disulfide bridge. Repeat copies occupy residues Ile191–Leu202, Glu209–Gln220, Glu222–Lys231, Asp235–Ser246, Gly250–Pro256, Asp260–Asp268, and Asp270–Ala280. The 4 X approximate repeats stretch occupies residues Ile191–Ser246. Positions Tyr198–Phe291 are P-domain. Asn201 is a glycosylation site (N-linked (GlcNAc...) asparagine). A 3 X approximate repeats region spans residues Gly250–Ala280. The interval Glu292 to Leu380 is C-domain. Residue Glu300 coordinates an alpha-D-glucoside. The Prevents secretion from ER signature appears at Gln377–Leu380.

It belongs to the calreticulin family. Component of an EIF2 complex at least composed of CELF1/CUGBP1, CALR, CALR3, EIF2S1, EIF2S2, HSP90B1 and HSPA5. In terms of tissue distribution, testis specific, absent in mature sperm.

The protein localises to the endoplasmic reticulum lumen. CALR3 capacity for calcium-binding may be absent or much lower than that of CALR. During spermatogenesis, may act as a lectin-independent chaperone for specific client proteins such as ADAM3. Required for sperm fertility. The protein is Calreticulin-3 (Calr3) of Mus musculus (Mouse).